Reading from the N-terminus, the 486-residue chain is Small ribosomal subunit protein uS4m (486 aa).

In terms of domain architecture, S4 RNA-binding spans K103–L172.

The protein belongs to the universal ribosomal protein uS4 family. Component of the mitochondrial small ribosomal subunit (mt-SSU). Mature yeast 74S mitochondrial ribosomes consist of a small (37S) and a large (54S) subunit. The 37S small subunit contains a 15S ribosomal RNA (15S mt-rRNA) and 34 different proteins. The 54S large subunit contains a 21S rRNA (21S mt-rRNA) and 46 different proteins. uS3m, uS4m and uS5m form the narrow entry site of the mRNA channel.

Its subcellular location is the mitochondrion. Component of the mitochondrial ribosome (mitoribosome), a dedicated translation machinery responsible for the synthesis of mitochondrial genome-encoded proteins, including at least some of the essential transmembrane subunits of the mitochondrial respiratory chain. The mitoribosomes are attached to the mitochondrial inner membrane and translation products are cotranslationally integrated into the membrane. In Saccharomyces cerevisiae (strain ATCC 204508 / S288c) (Baker's yeast), this protein is Small ribosomal subunit protein uS4m (NAM9).